Consider the following 95-residue polypeptide: Aspartyl/glutamyl-tRNA(Asn/Gln) amidotransferase subunit C (95 aa).

The protein belongs to the GatC family. As to quaternary structure, heterotrimer of A, B and C subunits.

The enzyme catalyses L-glutamyl-tRNA(Gln) + L-glutamine + ATP + H2O = L-glutaminyl-tRNA(Gln) + L-glutamate + ADP + phosphate + H(+). It catalyses the reaction L-aspartyl-tRNA(Asn) + L-glutamine + ATP + H2O = L-asparaginyl-tRNA(Asn) + L-glutamate + ADP + phosphate + 2 H(+). Allows the formation of correctly charged Asn-tRNA(Asn) or Gln-tRNA(Gln) through the transamidation of misacylated Asp-tRNA(Asn) or Glu-tRNA(Gln) in organisms which lack either or both of asparaginyl-tRNA or glutaminyl-tRNA synthetases. The reaction takes place in the presence of glutamine and ATP through an activated phospho-Asp-tRNA(Asn) or phospho-Glu-tRNA(Gln). This chain is Aspartyl/glutamyl-tRNA(Asn/Gln) amidotransferase subunit C, found in Thermodesulfovibrio yellowstonii (strain ATCC 51303 / DSM 11347 / YP87).